The primary structure comprises 160 residues: uncharacterized protein (160 aa).

The segment at 8 to 46 adopts an RING-type zinc-finger fold; the sequence is CAVCLDFFVEPCIIECGHSYCRFCIESHLNINEKCPLCR.

This is an uncharacterized protein from Caenorhabditis elegans.